Consider the following 234-residue polypeptide: Sugar fermentation stimulation protein A (234 aa).

Residues 201-220 constitute a DNA-binding region (H-T-H motif); the sequence is LLSEAQQRGVEILAYKAELS.

This sequence belongs to the SfsA family.

Functionally, binds to DNA non-specifically. Could be a regulatory factor involved in maltose metabolism. The sequence is that of Sugar fermentation stimulation protein A from Escherichia coli O7:K1 (strain IAI39 / ExPEC).